The chain runs to 132 residues: Ribosome-binding factor A (132 aa).

The protein belongs to the RbfA family. Monomer. Binds 30S ribosomal subunits, but not 50S ribosomal subunits or 70S ribosomes.

The protein resides in the cytoplasm. One of several proteins that assist in the late maturation steps of the functional core of the 30S ribosomal subunit. Associates with free 30S ribosomal subunits (but not with 30S subunits that are part of 70S ribosomes or polysomes). Required for efficient processing of 16S rRNA. May interact with the 5'-terminal helix region of 16S rRNA. This Pseudomonas putida (strain ATCC 700007 / DSM 6899 / JCM 31910 / BCRC 17059 / LMG 24140 / F1) protein is Ribosome-binding factor A.